Reading from the N-terminus, the 383-residue chain is Queuine tRNA-ribosyltransferase (383 aa).

The active-site Proton acceptor is Asp-90. Substrate is bound by residues 90 to 94 (DSGGF), Asp-144, Gln-193, and Gly-227. The segment at 258-264 (GVGTPED) is RNA binding. Asp-277 functions as the Nucleophile in the catalytic mechanism. The RNA binding; important for wobble base 34 recognition stretch occupies residues 282-286 (TRNAR). Positions 315, 317, 320, and 346 each coordinate Zn(2+).

Belongs to the queuine tRNA-ribosyltransferase family. Homodimer. Within each dimer, one monomer is responsible for RNA recognition and catalysis, while the other monomer binds to the replacement base PreQ1. It depends on Zn(2+) as a cofactor.

The enzyme catalyses 7-aminomethyl-7-carbaguanine + guanosine(34) in tRNA = 7-aminomethyl-7-carbaguanosine(34) in tRNA + guanine. The protein operates within tRNA modification; tRNA-queuosine biosynthesis. Catalyzes the base-exchange of a guanine (G) residue with the queuine precursor 7-aminomethyl-7-deazaguanine (PreQ1) at position 34 (anticodon wobble position) in tRNAs with GU(N) anticodons (tRNA-Asp, -Asn, -His and -Tyr). Catalysis occurs through a double-displacement mechanism. The nucleophile active site attacks the C1' of nucleotide 34 to detach the guanine base from the RNA, forming a covalent enzyme-RNA intermediate. The proton acceptor active site deprotonates the incoming PreQ1, allowing a nucleophilic attack on the C1' of the ribose to form the product. After dissociation, two additional enzymatic reactions on the tRNA convert PreQ1 to queuine (Q), resulting in the hypermodified nucleoside queuosine (7-(((4,5-cis-dihydroxy-2-cyclopenten-1-yl)amino)methyl)-7-deazaguanosine). This is Queuine tRNA-ribosyltransferase from Ralstonia nicotianae (strain ATCC BAA-1114 / GMI1000) (Ralstonia solanacearum).